We begin with the raw amino-acid sequence, 329 residues long: L-carnitine dehydrogenase (329 aa).

19-24 is an NAD(+) binding site; the sequence is GAGVIG.

It belongs to the 3-hydroxyacyl-CoA dehydrogenase family. L-carnitine dehydrogenase subfamily. Homodimer.

Its subcellular location is the cytoplasm. It carries out the reaction carnitine + NAD(+) = 3-dehydrocarnitine + NADH + H(+). The protein operates within amine and polyamine metabolism; carnitine metabolism. Catalyzes the NAD(+)-dependent oxidation of L-carnitine to 3-dehydrocarnitine. The chain is L-carnitine dehydrogenase from Nocardiopsis dassonvillei (strain ATCC 23218 / DSM 43111 / CIP 107115 / JCM 7437 / KCTC 9190 / NBRC 14626 / NCTC 10488 / NRRL B-5397 / IMRU 509) (Actinomadura dassonvillei).